Here is a 239-residue protein sequence, read N- to C-terminus: Ribonuclease PH (239 aa).

Residues R86 and 124 to 126 contribute to the phosphate site; that span reads GTR.

The protein belongs to the RNase PH family. As to quaternary structure, homohexameric ring arranged as a trimer of dimers.

The catalysed reaction is tRNA(n+1) + phosphate = tRNA(n) + a ribonucleoside 5'-diphosphate. Functionally, phosphorolytic 3'-5' exoribonuclease that plays an important role in tRNA 3'-end maturation. Removes nucleotide residues following the 3'-CCA terminus of tRNAs; can also add nucleotides to the ends of RNA molecules by using nucleoside diphosphates as substrates, but this may not be physiologically important. Probably plays a role in initiation of 16S rRNA degradation (leading to ribosome degradation) during starvation. The chain is Ribonuclease PH from Sinorhizobium medicae (strain WSM419) (Ensifer medicae).